Consider the following 2843-residue polypeptide: Adenomatous polyposis coli protein (2843 aa).

Ala-2 carries the N-acetylalanine modification. A coiled-coil region spans residues Ala-2–Ala-61. Residues Ser-107 and Ser-111 each carry the phosphoserine modification. The stretch at Ser-127–Asn-248 forms a coiled coil. The tract at residues Ala-239–Thr-305 is disordered. Over residues Glu-241–Asn-261 the composition is skewed to basic and acidic residues. Polar residues predominate over residues Met-271–Thr-282. Residues Ser-290 to Ser-299 show a composition bias toward low complexity. ARM repeat units lie at residues Leu-453–Ile-495, Leu-505–Val-547, Leu-548–Ala-591, Leu-592–Ile-638, Leu-639–Thr-683, Leu-684–Ala-725, and Leu-726–Gln-767. 3 positions are modified to phosphoserine: Ser-744, Ser-748, and Ser-780. The tract at residues Thr-828–Leu-878 is disordered. A compositionally biased stretch (low complexity) spans Ser-833–Ser-843. The segment covering Ser-844–Gly-857 has biased composition (basic and acidic residues). Residues Asn-869–Leu-878 show a composition bias toward polar residues. Ser-908 is modified (phosphoserine). Disordered stretches follow at residues Arg-923–Ser-943 and Arg-958–Ser-987. A compositionally biased stretch (polar residues) spans Ala-927–Ser-943. A responsible for down-regulation through a process mediated by direct ubiquitination region spans residues Ser-960–Leu-1337. Residues Asn-961–Asp-971 are compositionally biased toward low complexity. Residues Ser-987, Ser-1038, and Ser-1042 each carry the phosphoserine modification. The interval Glu-1020–Glu-1169 is interaction with catenins. 3 disordered regions span residues Val-1099 to Glu-1169, Ser-1190 to Gln-1244, and Ile-1311 to Tyr-1376. Residues Ala-1107–Cys-1130 show a composition bias toward polar residues. The segment covering Arg-1146–Pro-1159 has biased composition (basic and acidic residues). Residues Ser-1190–Asn-1224 show a composition bias toward low complexity. The span at Ala-1225–Gln-1244 shows a compositional bias: polar residues. Low complexity-rich tracts occupy residues Ser-1335–Glu-1345 and Ser-1355–Ala-1366. Phosphoserine occurs at positions 1360, 1371, 1385, 1392, and 1395. Disordered regions lie at residues Ser-1403–Ala-1475, Pro-1526–Asp-1569, Met-1583–Gln-1611, Ser-1664–Lys-1717, and Asn-1729–Gly-1836. Thr-1438 is modified (phosphothreonine). Basic and acidic residues-rich tracts occupy residues Thr-1448–Gly-1466 and Glu-1540–Leu-1564. Position 1567 is a phosphoserine (Ser-1567). A compositionally biased stretch (basic and acidic residues) spans Glu-1683 to Asp-1698. The segment covering Gly-1735–Lys-1744 has biased composition (basic residues). Ser-1774 is modified (phosphoserine). Composition is skewed to basic and acidic residues over residues Tyr-1785–Asp-1794 and Val-1804–Lys-1813. Ser-1861, Ser-1863, and Ser-1864 each carry phosphoserine. The interval Asp-1866–Lys-1893 is highly charged. Positions Leu-1881–Ser-1896 are enriched in basic and acidic residues. Disordered regions lie at residues Leu-1881–Lys-1950, His-1965–Ser-2011, and Ile-2043–Leu-2072. 2 stretches are compositionally biased toward polar residues: residues His-1897–Ile-1913 and Gln-1928–Lys-1938. Over residues Asp-1939 to Lys-1950 the composition is skewed to basic and acidic residues. Phosphoserine is present on residues Ser-1971 and Ser-1973. Residues Asn-1979–Glu-1991 show a composition bias toward basic and acidic residues. Residues Glu-2035–Asp-2059 are interaction with AXIN1. Residues Ser-2088, Ser-2093, Ser-2125, Ser-2129, Ser-2130, and Ser-2132 each carry the phosphoserine modification. Disordered stretches follow at residues Pro-2147–Thr-2635 and Asn-2667–Arg-2714. The residue at position 2151 (Thr-2151) is a Phosphothreonine. Residues Ile-2167 to Ser-2674 form a basic region region. The segment covering Lys-2169–Gly-2187 has biased composition (basic and acidic residues). Polar residues-rich tracts occupy residues Val-2203–Ser-2223 and Ala-2257–Pro-2271. A phosphoserine mark is found at Ser-2260, Ser-2270, and Ser-2283. Over residues Ala-2286–Pro-2331 the composition is skewed to polar residues. Over residues Thr-2348 to Pro-2369 the composition is skewed to low complexity. 2 stretches are compositionally biased toward polar residues: residues Gly-2370–Gly-2409 and Arg-2418–Ser-2427. Over residues Ser-2459–Ser-2477 the composition is skewed to low complexity. Residues Ser-2473 and Ser-2535 each carry the phosphoserine modification. The tract at residues Thr-2475–Val-2843 is interaction with DLG1. Residues Asn-2518 to Ser-2535 show a composition bias toward basic and acidic residues. The span at Ser-2555 to Gly-2568 shows a compositional bias: polar residues. Ser-2569 is modified (phosphoserine). Residues Ser-2569–Glu-2579 are compositionally biased toward low complexity. Basic and acidic residues predominate over residues Ser-2580–Val-2592. 3 stretches are compositionally biased toward polar residues: residues Asn-2593–Ala-2608, Phe-2620–Thr-2635, and Asn-2668–Thr-2679. 2 positions are modified to phosphoserine: Ser-2671 and Ser-2674. The segment at Ser-2674–Val-2843 is interaction with MAPRE1. Position 2679 is a phosphothreonine (Thr-2679). Phosphoserine occurs at positions 2710 and 2724. The tract at residues Asp-2729–Val-2843 is disordered. The segment covering Gly-2741–Val-2757 has biased composition (polar residues). Over residues Ser-2763 to Ser-2774 the composition is skewed to low complexity. Over residues Phe-2784–Asn-2812 the composition is skewed to polar residues. Ser-2789 carries the phosphoserine modification. Positions Ser-2803 to Pro-2806 match the Microtubule tip localization signal motif. Residues Thr-2841–Val-2843 carry the PDZ-binding motif.

This sequence belongs to the adenomatous polyposis coli (APC) family. Forms homooligomers. Found in a complex consisting of ARHGEF4, APC and CTNNB1. Found in a complex composed of MACF1, APC, AXIN1, CTNNB1 and GSK3B. The complex composed, at least, of APC, CTNNB1 and GSK3B interacts with JPT1; the interaction requires the inactive form of GSK3B (phosphorylated at 'Ser-9'). Interacts with APC2. Interacts with DLG1 (via PDZ domains) and DLG3 (via PDZ domains). Interacts with alpha- and beta-catenins. Interacts with AXIN1 (via RGS domain). Interacts with ARHGEF4 (via N-terminus). Interacts (via C-terminal residues 2674-2843) with MAPRE1 (via C-terminal residues 206-211); the interaction inhibits association with and bundling of F-actin. Interacts with MAPRE2 and MAPRE3 (via C-terminus). Interacts with DIAPH1; DIAPH1 acts as a scaffold protein for MAPRE1 and APC to stabilize microtubules and promote cell migration. Interacts with DIAPH2. Interacts with SCRIB; may mediate APC targeting to adherens junctions of epithelial cells. Interacts with SPATA13 (via N-terminus and SH3 domain). Interacts with ASAP1 (via SH3 domain). Interacts (at the cell membrane) with AMER1 and AMER2 (via ARM repeats). Interacts with KHDRBS1. Interacts with actin; binds both to F-actin and actin filament bundles. Phosphorylated; phosphorylation enhances the F-actin bundling activity. Phosphorylated by GSK3B. Post-translationally, ubiquitinated, leading to its degradation by the proteasome. Ubiquitination is facilitated by Axin. Deubiquitinated by ZRANB1/TRABID. In terms of tissue distribution, expressed in a variety of tissues: brain, small intestine, colon, thymus, skeletal muscle, heart, prostate, lung, spleen, ovary, testis kidney, placenta, blood and liver. Isoform 1A: Very strongly expressed in brain but has relatively low expression levels in other tissues. Isoform 1B: Predominant form in all tissues except for brain, including gastric mucosa and blood.

It localises to the cell junction. The protein localises to the adherens junction. The protein resides in the cytoplasm. It is found in the cytoskeleton. Its subcellular location is the cell projection. It localises to the lamellipodium. The protein localises to the ruffle membrane. The protein resides in the cell membrane. In terms of biological role, tumor suppressor. Promotes rapid degradation of CTNNB1 and participates in Wnt signaling as a negative regulator. APC activity is correlated with its phosphorylation state. Activates the GEF activity of SPATA13 and ARHGEF4. Plays a role in hepatocyte growth factor (HGF)-induced cell migration. Required for MMP9 up-regulation via the JNK signaling pathway in colorectal tumor cells. Associates with both microtubules and actin filaments, components of the cytoskeleton. Plays a role in mediating the organization of F-actin into ordered bundles. Functions downstream of Rho GTPases and DIAPH1 to selectively stabilize microtubules. Acts as a mediator of ERBB2-dependent stabilization of microtubules at the cell cortex. It is required for the localization of MACF1 to the cell membrane and this localization of MACF1 is critical for its function in microtubule stabilization. This Homo sapiens (Human) protein is Adenomatous polyposis coli protein.